A 128-amino-acid polypeptide reads, in one-letter code: MAPVKKLVAKGGKKKKQVLKFTLDCTHPVEDGIMDAANFEQFLQERIKVNGKAGNLGGGVVTIERSKSKITVTSEEPFSKRYLKYLTKKYLKKNNLRDWLRVVANSKESYELRYFQINQDEEEEEDED.

At threonine 62 the chain carries Phosphothreonine. Serine 66 is subject to Phosphoserine. N6-succinyllysine is present on lysine 69.

It belongs to the eukaryotic ribosomal protein eL22 family. In terms of assembly, component of the large ribosomal subunit.

The protein resides in the cytoplasm. In terms of biological role, component of the large ribosomal subunit. The ribosome is a large ribonucleoprotein complex responsible for the synthesis of proteins in the cell. This Rattus norvegicus (Rat) protein is Large ribosomal subunit protein eL22 (Rpl22).